A 164-amino-acid polypeptide reads, in one-letter code: C-phycoerythrin class 1 subunit alpha (164 aa).

(2R,3E)-phycoerythrobilin-binding residues include cysteine 82 and cysteine 139.

It belongs to the phycobiliprotein family. In terms of assembly, heterodimer of an alpha and a beta chain. Post-translationally, contains two covalently linked phycoerythrobilin chromophores.

The protein resides in the cellular thylakoid membrane. Light-harvesting photosynthetic bile pigment-protein from the phycobiliprotein complex. This Synechococcus sp. (strain WH8020) protein is C-phycoerythrin class 1 subunit alpha (cpeA).